The sequence spans 773 residues: 3-isopropylmalate dehydratase (773 aa).

Residues Cys355, Cys415, and Cys418 each contribute to the [4Fe-4S] cluster site.

Belongs to the aconitase/IPM isomerase family. In terms of assembly, monomer. Requires [4Fe-4S] cluster as cofactor.

The enzyme catalyses (2R,3S)-3-isopropylmalate = (2S)-2-isopropylmalate. It participates in amino-acid biosynthesis; L-leucine biosynthesis; L-leucine from 3-methyl-2-oxobutanoate: step 2/4. In terms of biological role, catalyzes the isomerization between 2-isopropylmalate and 3-isopropylmalate, via the formation of 2-isopropylmaleate. The protein is 3-isopropylmalate dehydratase (LEU1) of Mycosarcoma maydis (Corn smut fungus).